The chain runs to 52 residues: UPF0057 membrane protein At1g57550 (52 aa).

The next 2 membrane-spanning stretches (helical) occupy residues 4 to 24 (FLEV…RYGL) and 30 to 50 (VCLL…IYVL).

Belongs to the UPF0057 (PMP3) family.

The protein resides in the membrane. This Arabidopsis thaliana (Mouse-ear cress) protein is UPF0057 membrane protein At1g57550.